Reading from the N-terminus, the 826-residue chain is Leucine--tRNA ligase (826 aa).

Positions 41–51 (PYPSGKLHMGH) match the 'HIGH' region motif. Positions 586 to 590 (KMSKS) match the 'KMSKS' region motif. Residue K589 coordinates ATP.

Belongs to the class-I aminoacyl-tRNA synthetase family.

It localises to the cytoplasm. The catalysed reaction is tRNA(Leu) + L-leucine + ATP = L-leucyl-tRNA(Leu) + AMP + diphosphate. The chain is Leucine--tRNA ligase from Natranaerobius thermophilus (strain ATCC BAA-1301 / DSM 18059 / JW/NM-WN-LF).